The following is a 195-amino-acid chain: COMM domain-containing protein 3 (195 aa).

The COMM domain maps to 124–193 (HITDVSWRLE…DASKSLERAT (70 aa)).

It belongs to the COMM domain-containing protein 3 family. As to quaternary structure, component of the commander complex consisting of the CCC subcomplex and the retriever subcomplex. Component of the CCC (COMMD/CCDC22/CCDC93) subcomplex consisting of COMMD1, COMMD2, COMMD3, COMMD4, COMMD5, COMMD6, COMMD7, COMMD8, COMMD9, COMMD10, CCDC22 and CCDC93; within the complex forms a heterodimer with COMMD2. Interacts with NFKB1/p105. Interacts with CCDC22, CCDC93, SCNN1B, CUL3, CUL4A, CUL4B, CUL5. In terms of tissue distribution, widely expressed with highest expression in thymus.

It is found in the cytoplasm. Its subcellular location is the nucleus. Scaffold protein in the commander complex that is essential for endosomal recycling of transmembrane cargos; the commander complex is composed of the CCC subcomplex and the retriever subcomplex. May modulate activity of cullin-RING E3 ubiquitin ligase (CRL) complexes. May down-regulate activation of NF-kappa-B. Modulates Na(+) transport in epithelial cells by regulation of apical cell surface expression of amiloride-sensitive sodium channel (ENaC) subunits. This chain is COMM domain-containing protein 3 (COMMD3), found in Homo sapiens (Human).